We begin with the raw amino-acid sequence, 388 residues long: MIYKTIVEGTTKVSVPVPPPDATFPPSAAPVFYNPEMELNRDINVAATAAFVERLLAKKELLREEVRYVDAFSASGIRGLRIAGEVGIHATMNDWSPEAFELIKENSKINGLEENTLATRKSANVLLHEQKYHIVDIDPFGTPAPFLDAASASVRGMLSVTATDTAPLCGAHLKAGIRKYASVPLNTEYHSEMGLRVLLGACARELAKHEKGMLPLLSHVTRHYVRTYLEVLPGTKQTDRTLKSMGFSIHCPKCGFRGPVYGLAVHIEKECPVCGSFTQIAGPLWLGPFREQAFCDEVISELEMHPLNTKDKAKKIITFCRDELDIPMFYDQHVICKELGASATGIEILIEALKAHGFEASRTHFSGTSFRTDAPITEIKEIIRALSW.

A Trm1 methyltransferase domain is found at 4–383 (KTIVEGTTKV…APITEIKEII (380 aa)). Positions 41, 78, 94, and 123 each coordinate S-adenosyl-L-methionine. Zn(2+) contacts are provided by Cys-251, Cys-254, Cys-271, and Cys-274.

Belongs to the class I-like SAM-binding methyltransferase superfamily. Trm1 family.

The catalysed reaction is guanosine(26) in tRNA + 2 S-adenosyl-L-methionine = N(2)-dimethylguanosine(26) in tRNA + 2 S-adenosyl-L-homocysteine + 2 H(+). Its function is as follows. Dimethylates a single guanine residue at position 26 of a number of tRNAs using S-adenosyl-L-methionine as donor of the methyl groups. The polypeptide is tRNA (guanine(26)-N(2))-dimethyltransferase (Methanosarcina barkeri (strain Fusaro / DSM 804)).